We begin with the raw amino-acid sequence, 173 residues long: Translation initiation factor IF-3 (173 aa).

This sequence belongs to the IF-3 family. In terms of assembly, monomer.

It is found in the cytoplasm. IF-3 binds to the 30S ribosomal subunit and shifts the equilibrium between 70S ribosomes and their 50S and 30S subunits in favor of the free subunits, thus enhancing the availability of 30S subunits on which protein synthesis initiation begins. The polypeptide is Translation initiation factor IF-3 (Ehrlichia ruminantium (strain Gardel)).